A 141-amino-acid chain; its full sequence is Cholinesterase (141 aa).

A glycan (N-linked (GlcNAc...) asparagine) is linked at Asn39. 49-50 (GG) contributes to the substrate binding site. The Acyl-ester intermediate role is filled by Ser131. Phosphoserine is present on Ser131.

Belongs to the type-B carboxylesterase/lipase family. In terms of assembly, homotetramer; disulfide-linked. Dimer of dimers. Present in most cells except erythrocytes.

It is found in the secreted. The catalysed reaction is an acylcholine + H2O = a carboxylate + choline + H(+). In terms of biological role, esterase with broad substrate specificity. Contributes to the inactivation of the neurotransmitter acetylcholine. Can degrade neurotoxic organophosphate esters. This Sus scrofa (Pig) protein is Cholinesterase (BCHE).